The chain runs to 728 residues: Phosphoribosylformylglycinamidine synthase subunit PurL (728 aa).

The active site involves histidine 40. ATP is bound by residues tyrosine 43 and lysine 82. A Mg(2+)-binding site is contributed by glutamate 84. Substrate contacts are provided by residues 85-88 (SHNH) and arginine 107. Histidine 86 functions as the Proton acceptor in the catalytic mechanism. A Mg(2+)-binding site is contributed by aspartate 108. Glutamine 231 contacts substrate. Mg(2+) is bound at residue aspartate 259. 303-305 (ESQ) serves as a coordination point for substrate. Positions 483 and 520 each coordinate ATP. Residue asparagine 521 participates in Mg(2+) binding. Residue serine 523 participates in substrate binding.

The protein belongs to the FGAMS family. Monomer. Part of the FGAM synthase complex composed of 1 PurL, 1 PurQ and 2 PurS subunits.

It is found in the cytoplasm. The enzyme catalyses N(2)-formyl-N(1)-(5-phospho-beta-D-ribosyl)glycinamide + L-glutamine + ATP + H2O = 2-formamido-N(1)-(5-O-phospho-beta-D-ribosyl)acetamidine + L-glutamate + ADP + phosphate + H(+). It participates in purine metabolism; IMP biosynthesis via de novo pathway; 5-amino-1-(5-phospho-D-ribosyl)imidazole from N(2)-formyl-N(1)-(5-phospho-D-ribosyl)glycinamide: step 1/2. Its function is as follows. Part of the phosphoribosylformylglycinamidine synthase complex involved in the purines biosynthetic pathway. Catalyzes the ATP-dependent conversion of formylglycinamide ribonucleotide (FGAR) and glutamine to yield formylglycinamidine ribonucleotide (FGAM) and glutamate. The FGAM synthase complex is composed of three subunits. PurQ produces an ammonia molecule by converting glutamine to glutamate. PurL transfers the ammonia molecule to FGAR to form FGAM in an ATP-dependent manner. PurS interacts with PurQ and PurL and is thought to assist in the transfer of the ammonia molecule from PurQ to PurL. In Carboxydothermus hydrogenoformans (strain ATCC BAA-161 / DSM 6008 / Z-2901), this protein is Phosphoribosylformylglycinamidine synthase subunit PurL.